Consider the following 109-residue polypeptide: SRA stem-loop-interacting RNA-binding protein, mitochondrial (109 aa).

The residue at position 15 (serine 15) is a Phosphoserine. The RRM domain maps to 19–103; it reads PVAFVRRIPW…RRPKLPQTSD (85 aa). Threonine 101 is subject to Phosphothreonine. Serine 102 bears the Phosphoserine mark.

Ubiquitously expressed, with highest level in heart, liver, skeletal muscle and testis.

It is found in the mitochondrion. Its subcellular location is the nucleus. Functionally, RNA-binding protein that acts as a nuclear receptor corepressor. Probably acts by binding the SRA RNA, and repressing the SRA-mediated nuclear receptor coactivation. Binds the STR7 loop of SRA RNA. Also able to repress glucocorticoid (GR), androgen (AR), thyroid (TR) and VDR-mediated transactivation. This chain is SRA stem-loop-interacting RNA-binding protein, mitochondrial (SLIRP), found in Homo sapiens (Human).